Here is a 669-residue protein sequence, read N- to C-terminus: Matrix metalloproteinase-15 (669 aa).

Residues 1–41 constitute a signal peptide (or 45); that stretch reads MGSDPSAPGRPGWTGSLLGDREEAARPRLLPLLLVLLGCLG. Positions 42–131 are excised as a propeptide; sequence LGVAAEDAEV…KANLRRRRKR (90 aa). The Cysteine switch signature appears at 109 to 116; sequence PRCGVPDQ. Cys-111 is a binding site for Zn(2+). Topologically, residues 132–625 are extracellular; that stretch reads YALTGRKWNN…QMEEVARTVN (494 aa). Residue Asn-150 is glycosylated (N-linked (GlcNAc...) asparagine). Zn(2+) is bound at residue His-259. Residue Glu-260 is part of the active site. Residues His-263 and His-269 each coordinate Zn(2+). Residues 300-370 are disordered; the sequence is QQLYGTPDGQ…RPDQYGPNIC (71 aa). Low complexity predominate over residues 305 to 322; sequence TPDGQPQPTQPLPTVTPR. Pro residues predominate over residues 333 to 342; sequence RPPQPPPPGG. Hemopexin repeat units follow at residues 367 to 415, 416 to 461, 463 to 511, and 512 to 559; these read PNIC…WRGL, PGDI…GLGI, YDRI…QGIP, and ASPK…FMGC. Residues Cys-370 and Cys-559 are joined by a disulfide bond. The segment at 574-593 is disordered; that stretch reads RPPFNPHGGAEPGADSAEGD. Ser-589 bears the Phosphoserine mark. The chain crosses the membrane as a helical span at residues 626-646; the sequence is VVMVLVPLLLLLCVLGLTYAL. Residues 647–669 are Cytoplasmic-facing; that stretch reads VQMQRKGAPRVLLYCKRSLQEWV.

Belongs to the peptidase M10A family. It depends on Zn(2+) as a cofactor. The cofactor is Ca(2+). Post-translationally, the precursor is cleaved by a furin endopeptidase. In terms of tissue distribution, appeared to be synthesized preferentially in liver, placenta, testis, colon and intestine. Substantial amounts are also detected in pancreas, kidney, lung, heart and skeletal muscle.

Its subcellular location is the membrane. Functionally, endopeptidase that degrades various components of the extracellular matrix. May activate progelatinase A. This is Matrix metalloproteinase-15 (MMP15) from Homo sapiens (Human).